The following is a 69-amino-acid chain: Large ribosomal subunit protein uL29 (69 aa).

Belongs to the universal ribosomal protein uL29 family.

This is Large ribosomal subunit protein uL29 from Rhodopseudomonas palustris (strain TIE-1).